Reading from the N-terminus, the 100-residue chain is NADH-quinone oxidoreductase subunit K 2 (100 aa).

3 helical membrane passes run 4 to 24 (LHSYLILSAILFSIGTIGVLI), 29 to 49 (IVIFMCVEMMLNSVNLTFIAL), and 60 to 80 (IFVFFVMTVAAAEAAVGLALM).

The protein belongs to the complex I subunit 4L family. As to quaternary structure, NDH-1 is composed of 14 different subunits. Subunits NuoA, H, J, K, L, M, N constitute the membrane sector of the complex.

The protein resides in the cell inner membrane. The catalysed reaction is a quinone + NADH + 5 H(+)(in) = a quinol + NAD(+) + 4 H(+)(out). NDH-1 shuttles electrons from NADH, via FMN and iron-sulfur (Fe-S) centers, to quinones in the respiratory chain. The immediate electron acceptor for the enzyme in this species is believed to be ubiquinone. Couples the redox reaction to proton translocation (for every two electrons transferred, four hydrogen ions are translocated across the cytoplasmic membrane), and thus conserves the redox energy in a proton gradient. This Geobacter metallireducens (strain ATCC 53774 / DSM 7210 / GS-15) protein is NADH-quinone oxidoreductase subunit K 2.